We begin with the raw amino-acid sequence, 88 residues long: Small ribosomal subunit protein bS20 (88 aa).

The protein belongs to the bacterial ribosomal protein bS20 family.

Its function is as follows. Binds directly to 16S ribosomal RNA. The polypeptide is Small ribosomal subunit protein bS20 (Methylorubrum extorquens (strain CM4 / NCIMB 13688) (Methylobacterium extorquens)).